A 271-amino-acid chain; its full sequence is S-adenosylmethionine decarboxylase proenzyme (271 aa).

Residue serine 121 is the Schiff-base intermediate with substrate; via pyruvic acid of the active site. Pyruvic acid (Ser); by autocatalysis is present on serine 121. Histidine 126 serves as the catalytic Proton acceptor; for processing activity. Cysteine 149 functions as the Proton donor; for catalytic activity in the catalytic mechanism.

This sequence belongs to the prokaryotic AdoMetDC family. Type 2 subfamily. As to quaternary structure, heterooctamer of four alpha and four beta chains arranged as a tetramer of alpha/beta heterodimers. It depends on pyruvate as a cofactor. In terms of processing, is synthesized initially as an inactive proenzyme. Formation of the active enzyme involves a self-maturation process in which the active site pyruvoyl group is generated from an internal serine residue via an autocatalytic post-translational modification. Two non-identical subunits are generated from the proenzyme in this reaction, and the pyruvate is formed at the N-terminus of the alpha chain, which is derived from the carboxyl end of the proenzyme. The post-translation cleavage follows an unusual pathway, termed non-hydrolytic serinolysis, in which the side chain hydroxyl group of the serine supplies its oxygen atom to form the C-terminus of the beta chain, while the remainder of the serine residue undergoes an oxidative deamination to produce ammonia and the pyruvoyl group blocking the N-terminus of the alpha chain.

It catalyses the reaction S-adenosyl-L-methionine + H(+) = S-adenosyl 3-(methylsulfanyl)propylamine + CO2. It functions in the pathway amine and polyamine biosynthesis; S-adenosylmethioninamine biosynthesis; S-adenosylmethioninamine from S-adenosyl-L-methionine: step 1/1. In terms of biological role, catalyzes the decarboxylation of S-adenosylmethionine to S-adenosylmethioninamine (dcAdoMet), the propylamine donor required for the synthesis of the polyamines spermine and spermidine from the diamine putrescine. The polypeptide is S-adenosylmethionine decarboxylase proenzyme (Clostridium beijerinckii (strain ATCC 51743 / NCIMB 8052) (Clostridium acetobutylicum)).